The sequence spans 444 residues: Cop9 signalosome complex subunit 11 (444 aa).

Positions 195-367 (FFTMMTSEPL…IHFEDSSILQ (173 aa)) constitute a PCI domain. The interval 419 to 439 (SSDDMDIDEVNDRSDISDSEG) is disordered.

In terms of assembly, component of a COP9 signalosome-like (CSN) complex, composed of RRI1/CSN5, CSN9, RRI2/CSN10, PCI8/CSN11, CSN12 and CSI1. Interacts with PRT1 and RPG1, 2 subunits of the core complex of translation initiation factor 3 (eIF3).

The protein resides in the cytoplasm. Its subcellular location is the nucleus. Functionally, component of the COP9 signalosome (CSN) complex that acts as an regulator of the ubiquitin (Ubl) conjugation pathway by mediating the deneddylation of the cullin subunit of SCF-type E3 ubiquitin-protein ligase complexes The CSN complex is involved in the regulation of the mating pheromone response. PCI8 may also be involved in transcriptional and translational control. This is Cop9 signalosome complex subunit 11 (PCI8) from Saccharomyces cerevisiae (strain ATCC 204508 / S288c) (Baker's yeast).